A 205-amino-acid chain; its full sequence is MTEFESAPAYQEAKYLTSAAEFDQLPPDQGAEIAFIGRSNAGKSSALNIITGIKGLARTSKTPGRTQMINFFALNEHERLVDLPGYGYAKVPRMVQKRWEELVDSYLKNRRCLKGLVVVMDIRHPLKEMDEDVIEWAVNYDIPIHILLTKSDKLSQNAAKKTLGEVQTAISAYGEKLTLQLFSSHDRTGLDEVKAVLSQWFRSEP.

Residues 29–203 (QGAEIAFIGR…KAVLSQWFRS (175 aa)) form the EngB-type G domain. GTP contacts are provided by residues 37 to 44 (GRSNAGKS), 64 to 68 (GRTQM), 82 to 85 (DLPG), 149 to 152 (TKSD), and 182 to 184 (FSS). Residues serine 44 and threonine 66 each contribute to the Mg(2+) site.

It belongs to the TRAFAC class TrmE-Era-EngA-EngB-Septin-like GTPase superfamily. EngB GTPase family. Requires Mg(2+) as cofactor.

Necessary for normal cell division and for the maintenance of normal septation. The protein is Probable GTP-binding protein EngB of Coxiella burnetii (strain RSA 331 / Henzerling II).